The chain runs to 334 residues: DNA-directed RNA polymerase subunit alpha (334 aa).

Positions Met-1 to Gln-234 are alpha N-terminal domain (alpha-NTD). Residues Ile-248–Gly-334 are alpha C-terminal domain (alpha-CTD).

The protein belongs to the RNA polymerase alpha chain family. In terms of assembly, homodimer. The RNAP catalytic core consists of 2 alpha, 1 beta, 1 beta' and 1 omega subunit. When a sigma factor is associated with the core the holoenzyme is formed, which can initiate transcription.

It catalyses the reaction RNA(n) + a ribonucleoside 5'-triphosphate = RNA(n+1) + diphosphate. DNA-dependent RNA polymerase catalyzes the transcription of DNA into RNA using the four ribonucleoside triphosphates as substrates. The protein is DNA-directed RNA polymerase subunit alpha of Thioalkalivibrio sulfidiphilus (strain HL-EbGR7).